The following is a 441-amino-acid chain: Malate dehydrogenase [NADP], chloroplastic (441 aa).

Residues 1–58 (MALTQLNSTCSKPQLHSSSQLSFLSRTRTRTLPRHYHSTFAPLHRTQHARISCSVAPN) constitute a chloroplast transit peptide. Cysteines 76 and 81 form a disulfide. 105-111 (GAAGMIS) lines the NADP(+) pocket. R186 and R192 together coordinate substrate. N199 is an NADP(+) binding site. Q206 lines the NAD(+) pocket. Position 223–225 (223–225 (VGN)) interacts with NADP(+). Positions 225 and 256 each coordinate substrate. H281 (proton acceptor) is an active-site residue. C417 and C429 form a disulfide bridge.

It belongs to the LDH/MDH superfamily. MDH type 2 family. Homodimer.

It is found in the plastid. It localises to the chloroplast. It catalyses the reaction (S)-malate + NADP(+) = oxaloacetate + NADPH + H(+). Chloroplast NADP-MDH is activated upon illumination. In order to be enzymatically active, disulfide bridges on the protein must be reduced by thioredoxin which receives electrons from ferredoxin and the electron transport system of photosynthesis. In terms of biological role, the chloroplastic, NADP-dependent form is essential for the photosynthesis C4 cycle, which allows plants to circumvent the problem of photorespiration. In C4 plants, NADP-MDH activity acts to convert oxaloacetate to malate in chloroplasts of mesophyll cells for transport to the bundle sheath cells. This Pisum sativum (Garden pea) protein is Malate dehydrogenase [NADP], chloroplastic.